Reading from the N-terminus, the 96-residue chain is Protein Vpr (96 aa).

Residues 1 to 42 (MEQAPEDQGPQREPYNEWTLELLEELKSEAVRHFPRIWLHSL) are homooligomerization. Phosphoserine; by host occurs at positions 79, 94, and 96.

This sequence belongs to the HIV-1 VPR protein family. In terms of assembly, homooligomer, may form homodimer. Interacts with p6-gag region of the Pr55 Gag precursor protein through a (Leu-X-X)4 motif near the C-terminus of the P6gag protein. Interacts with host UNG. May interact with host RAD23A/HHR23A. Interacts with host VPRBP/DCAF1, leading to hijack the CUL4A-RBX1-DDB1-DCAF1/VPRBP complex, mediating ubiquitination of host proteins such as TERT and ZGPAT and arrest of the cell cycle in G2 phase. Phosphorylated on several residues by host. These phosphorylations regulate VPR activity for the nuclear import of the HIV-1 pre-integration complex.

The protein resides in the virion. It localises to the host nucleus. Its subcellular location is the host extracellular space. Functionally, during virus replication, may deplete host UNG protein, and incude G2-M cell cycle arrest. Acts by targeting specific host proteins for degradation by the 26S proteasome, through association with the cellular CUL4A-DDB1 E3 ligase complex by direct interaction with host VPRPB/DCAF-1. Cell cycle arrest reportedly occurs within hours of infection and is not blocked by antiviral agents, suggesting that it is initiated by the VPR carried into the virion. Additionally, VPR induces apoptosis in a cell cycle dependent manner suggesting that these two effects are mechanistically linked. Detected in the serum and cerebrospinal fluid of AIDS patient, VPR may also induce cell death to bystander cells. During virus entry, plays a role in the transport of the viral pre-integration (PIC) complex to the host nucleus. This function is crucial for viral infection of non-dividing macrophages. May act directly at the nuclear pore complex, by binding nucleoporins phenylalanine-glycine (FG)-repeat regions. In Human immunodeficiency virus type 1 group M subtype D (isolate Z2/CDC-Z34) (HIV-1), this protein is Protein Vpr.